The primary structure comprises 152 residues: SKP1-like protein 11 (152 aa).

The segment at 94–152 is interaction with the F-box domain of F-box proteins; the sequence is ILAANYLNIKSLLDLTCQTVADMIKGKTPEEIRSTFNIENDFTPEEEEAVRKENQWAFE.

Belongs to the SKP1 family. Part of a SCF (SKP1-cullin-F-box) protein ligase complex. Interacts with ADO3/FKF1, COI1/FBL2, EBF1/FBL6, PP2A13, PP2B10, UFO, SKIP2, SKIP15, SKIP16, SKIP32, CPR1/CPR30, At1g55000, At1g67340, At1g78100, At3g04660, At3g16740, At3g61590, At4g38940 and At5g49610. Expressed in young seedlings, cotyledons, roots, leaves, floral stems, inflorescences, pollen, and siliques, with a slightly higher level in inflorescence than in other tissues.

It localises to the nucleus. It participates in protein modification; protein ubiquitination. Functionally, involved in ubiquitination and subsequent proteasomal degradation of target proteins. Together with CUL1, RBX1 and a F-box protein, it forms a SCF E3 ubiquitin ligase complex. The functional specificity of this complex depends on the type of F-box protein. In the SCF complex, it serves as an adapter that links the F-box protein to CUL1. Plays a role during early flowers reproductive development. The chain is SKP1-like protein 11 (ASK11) from Arabidopsis thaliana (Mouse-ear cress).